Consider the following 348-residue polypeptide: tRNA N6-adenosine threonylcarbamoyltransferase (348 aa).

2 residues coordinate Fe cation: H118 and H122. Substrate is bound by residues 140–144 (LVSGG), D173, G186, D190, and N279. D309 contributes to the Fe cation binding site.

This sequence belongs to the KAE1 / TsaD family. The cofactor is Fe(2+).

The protein localises to the cytoplasm. It catalyses the reaction L-threonylcarbamoyladenylate + adenosine(37) in tRNA = N(6)-L-threonylcarbamoyladenosine(37) in tRNA + AMP + H(+). In terms of biological role, required for the formation of a threonylcarbamoyl group on adenosine at position 37 (t(6)A37) in tRNAs that read codons beginning with adenine. Is involved in the transfer of the threonylcarbamoyl moiety of threonylcarbamoyl-AMP (TC-AMP) to the N6 group of A37, together with TsaE and TsaB. TsaD likely plays a direct catalytic role in this reaction. This is tRNA N6-adenosine threonylcarbamoyltransferase from Lactiplantibacillus plantarum (strain ATCC BAA-793 / NCIMB 8826 / WCFS1) (Lactobacillus plantarum).